We begin with the raw amino-acid sequence, 266 residues long: Interleukin-1 beta (266 aa).

A propeptide spanning residues 1–113 is cleaved from the precursor; sequence MATVPEPINE…ETSSDEFLCD (113 aa).

This sequence belongs to the IL-1 family. In terms of assembly, monomer. In its precursor form, weakly interacts with full-length MEFV; the mature cytokine does not interact at all. Interacts with integrins ITGAV:ITGBV and ITGA5:ITGB1; integrin-binding is required for IL1B signaling. Interacts with cargo receptor TMED10; the interaction is direct and is required for the secretion of IL1B mature form. Interacts with HSP90AB1; the interaction facilitates cargo translocation into the ERGIC. Interacts with HSP90B1; the interaction facilitates cargo translocation into the ERGIC.

It localises to the cytoplasm. Its subcellular location is the cytosol. It is found in the secreted. The protein resides in the lysosome. The protein localises to the extracellular exosome. Potent pro-inflammatory cytokine. Initially discovered as the major endogenous pyrogen, induces prostaglandin synthesis, neutrophil influx and activation, T-cell activation and cytokine production, B-cell activation and antibody production, and fibroblast proliferation and collagen production. Promotes Th17 differentiation of T-cells. Synergizes with IL12/interleukin-12 to induce IFNG synthesis from T-helper 1 (Th1) cells. Plays a role in angiogenesis by inducing VEGF production synergistically with TNF and IL6. Involved in transduction of inflammation downstream of pyroptosis: its mature form is specifically released in the extracellular milieu by passing through the gasdermin-D (GSDMD) pore. The polypeptide is Interleukin-1 beta (IL1B) (Bubalus carabanensis (Swamp type water buffalo)).